Here is a 319-residue protein sequence, read N- to C-terminus: Acetyl-coenzyme A carboxylase carboxyl transferase subunit alpha (319 aa).

Residues 38–292 form the CoA carboxyltransferase C-terminal domain; sequence ALDKKAADLL…GKAIASMLAG (255 aa).

The protein belongs to the AccA family. In terms of assembly, acetyl-CoA carboxylase is a heterohexamer composed of biotin carboxyl carrier protein (AccB), biotin carboxylase (AccC) and two subunits each of ACCase subunit alpha (AccA) and ACCase subunit beta (AccD).

Its subcellular location is the cytoplasm. It carries out the reaction N(6)-carboxybiotinyl-L-lysyl-[protein] + acetyl-CoA = N(6)-biotinyl-L-lysyl-[protein] + malonyl-CoA. Its pathway is lipid metabolism; malonyl-CoA biosynthesis; malonyl-CoA from acetyl-CoA: step 1/1. Component of the acetyl coenzyme A carboxylase (ACC) complex. First, biotin carboxylase catalyzes the carboxylation of biotin on its carrier protein (BCCP) and then the CO(2) group is transferred by the carboxyltransferase to acetyl-CoA to form malonyl-CoA. The protein is Acetyl-coenzyme A carboxylase carboxyl transferase subunit alpha of Jannaschia sp. (strain CCS1).